The primary structure comprises 305 residues: UDP-3-O-acyl-N-acetylglucosamine deacetylase (305 aa).

Residues histidine 78, histidine 237, and aspartate 241 each coordinate Zn(2+). Histidine 264 (proton donor) is an active-site residue.

This sequence belongs to the LpxC family. The cofactor is Zn(2+).

It carries out the reaction a UDP-3-O-[(3R)-3-hydroxyacyl]-N-acetyl-alpha-D-glucosamine + H2O = a UDP-3-O-[(3R)-3-hydroxyacyl]-alpha-D-glucosamine + acetate. Its pathway is glycolipid biosynthesis; lipid IV(A) biosynthesis; lipid IV(A) from (3R)-3-hydroxytetradecanoyl-[acyl-carrier-protein] and UDP-N-acetyl-alpha-D-glucosamine: step 2/6. Its function is as follows. Catalyzes the hydrolysis of UDP-3-O-myristoyl-N-acetylglucosamine to form UDP-3-O-myristoylglucosamine and acetate, the committed step in lipid A biosynthesis. This is UDP-3-O-acyl-N-acetylglucosamine deacetylase from Burkholderia cenocepacia (strain HI2424).